The sequence spans 267 residues: tRNA pseudouridine synthase A (267 aa).

D53 functions as the Nucleophile in the catalytic mechanism. Substrate is bound at residue Y114.

This sequence belongs to the tRNA pseudouridine synthase TruA family. As to quaternary structure, homodimer.

The enzyme catalyses uridine(38/39/40) in tRNA = pseudouridine(38/39/40) in tRNA. In terms of biological role, formation of pseudouridine at positions 38, 39 and 40 in the anticodon stem and loop of transfer RNAs. The protein is tRNA pseudouridine synthase A of Chlamydia muridarum (strain MoPn / Nigg).